Here is a 152-residue protein sequence, read N- to C-terminus: Transcriptional regulator MraZ (152 aa).

SpoVT-AbrB domains follow at residues 5 to 52 (ATLV…PLPE) and 81 to 124 (ASEC…DETT).

This sequence belongs to the MraZ family. In terms of assembly, forms oligomers.

The protein localises to the cytoplasm. The protein resides in the nucleoid. Negatively regulates its own expression and that of the subsequent genes in the proximal part of the division and cell wall (dcw) gene cluster. Acts by binding directly to DNA. May also regulate the expression of genes outside the dcw cluster. This chain is Transcriptional regulator MraZ, found in Klebsiella pneumoniae subsp. pneumoniae (strain ATCC 700721 / MGH 78578).